Reading from the N-terminus, the 131-residue chain is Large ribosomal subunit protein bL17 (131 aa).

The protein belongs to the bacterial ribosomal protein bL17 family. Part of the 50S ribosomal subunit. Contacts protein L32.

This chain is Large ribosomal subunit protein bL17, found in Oenococcus oeni (strain ATCC BAA-331 / PSU-1).